The chain runs to 303 residues: Protoheme IX farnesyltransferase (303 aa).

Transmembrane regions (helical) follow at residues Met-25–Met-45, Ile-54–Leu-74, Leu-104–Ile-124, Pro-125–Ser-145, Trp-151–Ile-171, Ala-179–Ile-199, Phe-227–Phe-247, Val-248–Lys-268, and Phe-280–Leu-300.

Belongs to the UbiA prenyltransferase family. Protoheme IX farnesyltransferase subfamily. Interacts with CtaA.

It localises to the cell membrane. It catalyses the reaction heme b + (2E,6E)-farnesyl diphosphate + H2O = Fe(II)-heme o + diphosphate. It participates in porphyrin-containing compound metabolism; heme O biosynthesis; heme O from protoheme: step 1/1. Converts heme B (protoheme IX) to heme O by substitution of the vinyl group on carbon 2 of heme B porphyrin ring with a hydroxyethyl farnesyl side group. The sequence is that of Protoheme IX farnesyltransferase from Staphylococcus aureus (strain Mu3 / ATCC 700698).